An 84-amino-acid polypeptide reads, in one-letter code: Putative antitoxin RelB4 (84 aa).

In terms of biological role, antitoxin component of a type II toxin-antitoxin (TA) system. Its cognate toxin is RelE4 (Potential). The chain is Putative antitoxin RelB4 (relB4) from Methanocaldococcus jannaschii (strain ATCC 43067 / DSM 2661 / JAL-1 / JCM 10045 / NBRC 100440) (Methanococcus jannaschii).